The sequence spans 184 residues: Bifunctional protein PyrR (184 aa).

A PRPP-binding motif is present at residues 98–110 (VVLVDDVLYTGRT).

It belongs to the purine/pyrimidine phosphoribosyltransferase family. PyrR subfamily.

It catalyses the reaction UMP + diphosphate = 5-phospho-alpha-D-ribose 1-diphosphate + uracil. Functionally, regulates the transcription of the pyrimidine nucleotide (pyr) operon in response to exogenous pyrimidines. In terms of biological role, also displays a weak uracil phosphoribosyltransferase activity which is not physiologically significant. The chain is Bifunctional protein PyrR from Roseiflexus castenholzii (strain DSM 13941 / HLO8).